Reading from the N-terminus, the 299-residue chain is uncharacterized protein (299 aa).

Residues methionine 1–threonine 59 enclose the HTH lysR-type domain. The H-T-H motif DNA-binding region spans phenylalanine 19 to glutamine 38.

It belongs to the LysR transcriptional regulatory family.

This is an uncharacterized protein from Escherichia coli (strain K12).